We begin with the raw amino-acid sequence, 445 residues long: Tubulin beta chain (445 aa).

Positions 1-4 match the MREI motif motif; that stretch reads MREI. Positions 11, 69, 138, 142, 143, 144, 204, and 226 each coordinate GTP. A Mg(2+)-binding site is contributed by Glu-69. Residues 421–445 form a disordered region; that stretch reads EYQQYQDATAEEEGEGEEEGDEEVA. A compositionally biased stretch (acidic residues) spans 429–445; the sequence is TAEEEGEGEEEGDEEVA. Position 438 is a 5-glutamyl polyglutamate (Glu-438).

Belongs to the tubulin family. In terms of assembly, dimer of alpha and beta chains. A typical microtubule is a hollow water-filled tube with an outer diameter of 25 nm and an inner diameter of 15 nM. Alpha-beta heterodimers associate head-to-tail to form protofilaments running lengthwise along the microtubule wall with the beta-tubulin subunit facing the microtubule plus end conferring a structural polarity. Microtubules usually have 13 protofilaments but different protofilament numbers can be found in some organisms and specialized cells. It depends on Mg(2+) as a cofactor. Some glutamate residues at the C-terminus are polyglycylated, resulting in polyglycine chains on the gamma-carboxyl group. Glycylation is mainly limited to tubulin incorporated into axonemes (cilia and flagella) whereas glutamylation is prevalent in neuronal cells, centrioles, axonemes, and the mitotic spindle. Both modifications can coexist on the same protein on adjacent residues, and lowering polyglycylation levels increases polyglutamylation, and reciprocally. The precise function of polyglycylation is still unclear. Post-translationally, some glutamate residues at the C-terminus are polyglutamylated, resulting in polyglutamate chains on the gamma-carboxyl group. Polyglutamylation plays a key role in microtubule severing by spastin (SPAST). SPAST preferentially recognizes and acts on microtubules decorated with short polyglutamate tails: severing activity by SPAST increases as the number of glutamates per tubulin rises from one to eight, but decreases beyond this glutamylation threshold. In terms of tissue distribution, brain.

It localises to the cytoplasm. Its subcellular location is the cytoskeleton. Tubulin is the major constituent of microtubules, a cylinder consisting of laterally associated linear protofilaments composed of alpha- and beta-tubulin heterodimers. Microtubules grow by the addition of GTP-tubulin dimers to the microtubule end, where a stabilizing cap forms. Below the cap, tubulin dimers are in GDP-bound state, owing to GTPase activity of alpha-tubulin. The chain is Tubulin beta chain from Pseudopleuronectes americanus (Winter flounder).